We begin with the raw amino-acid sequence, 158 residues long: Disulfide bond formation protein B (158 aa).

The Cytoplasmic segment spans residues 1–7 (MKNSRPV). The chain crosses the membrane as a helical span at residues 8 to 24 (LFAVALASLLLLAVALY). Residues 25 to 42 (LQHVENMLPCPLCVIQRY) lie on the Periplasmic side of the membrane. A disulfide bridge connects residues C34 and C37. Residues 43-57 (AFAAIALICLVTAFR) form a helical membrane-spanning segment. The Cytoplasmic portion of the chain corresponds to 58 to 63 (TEVTAR). Residues 64-81 (IGAALAALASLAGAGVAG) form a helical membrane-spanning segment. The Periplasmic segment spans residues 82–136 (WHIYIKAHPTVSCGIDPLETSLNTIPTAKLLPFLLQADGLCTTEYAPIMGLSIPQ). The cysteines at positions 94 and 122 are disulfide-linked. Residues 137 to 155 (WALVWFIVIALFLLHTAFR) traverse the membrane as a helical segment. The Cytoplasmic segment spans residues 156–158 (KKS).

Belongs to the DsbB family.

Its subcellular location is the cell inner membrane. Its function is as follows. Required for disulfide bond formation in some periplasmic proteins. Acts by oxidizing the DsbA protein. In Herminiimonas arsenicoxydans, this protein is Disulfide bond formation protein B.